We begin with the raw amino-acid sequence, 152 residues long: Large ribosomal subunit protein bL9 (152 aa).

Belongs to the bacterial ribosomal protein bL9 family.

Its function is as follows. Binds to the 23S rRNA. The sequence is that of Large ribosomal subunit protein bL9 from Synechococcus sp. (strain CC9902).